We begin with the raw amino-acid sequence, 136 residues long: Ribonuclease P protein component (136 aa).

It belongs to the RnpA family. Consists of a catalytic RNA component (M1 or rnpB) and a protein subunit.

It catalyses the reaction Endonucleolytic cleavage of RNA, removing 5'-extranucleotides from tRNA precursor.. Functionally, RNaseP catalyzes the removal of the 5'-leader sequence from pre-tRNA to produce the mature 5'-terminus. It can also cleave other RNA substrates such as 4.5S RNA. The protein component plays an auxiliary but essential role in vivo by binding to the 5'-leader sequence and broadening the substrate specificity of the ribozyme. This Arthrobacter sp. (strain FB24) protein is Ribonuclease P protein component.